A 160-amino-acid chain; its full sequence is Cyclic pyranopterin monophosphate synthase (160 aa).

Residues 74–76 (LSH) and 112–113 (ME) contribute to the substrate site. D127 is a catalytic residue.

This sequence belongs to the MoaC family. Homohexamer; trimer of dimers.

It catalyses the reaction (8S)-3',8-cyclo-7,8-dihydroguanosine 5'-triphosphate = cyclic pyranopterin phosphate + diphosphate. Its pathway is cofactor biosynthesis; molybdopterin biosynthesis. Catalyzes the conversion of (8S)-3',8-cyclo-7,8-dihydroguanosine 5'-triphosphate to cyclic pyranopterin monophosphate (cPMP). In Pelobacter propionicus (strain DSM 2379 / NBRC 103807 / OttBd1), this protein is Cyclic pyranopterin monophosphate synthase.